Reading from the N-terminus, the 138-residue chain is Basic phospholipase A2 Pla2Vb (138 aa).

A signal peptide spans 1–16; that stretch reads MRTLWIVAVWLMGVEG. 7 disulfides stabilise this stretch: Cys42–Cys131, Cys44–Cys60, Cys59–Cys111, Cys65–Cys138, Cys66–Cys104, Cys73–Cys97, and Cys91–Cys102. Residues Tyr43, Gly45, and Gly47 each contribute to the Ca(2+) site. Residue His63 is part of the active site. Asp64 contacts Ca(2+). Asp105 is an active-site residue.

It belongs to the phospholipase A2 family. Group II subfamily. D49 sub-subfamily. The cofactor is Ca(2+). In terms of tissue distribution, expressed by the venom gland.

It is found in the secreted. The catalysed reaction is a 1,2-diacyl-sn-glycero-3-phosphocholine + H2O = a 1-acyl-sn-glycero-3-phosphocholine + a fatty acid + H(+). Its function is as follows. Snake venom phospholipase A2 (PLA2) that exhibits medium anticoagulant effects by binding to factor Xa (F10) and inhibiting the prothrombinase activity (IC(50) is 90 nM). PLA2 catalyzes the calcium-dependent hydrolysis of the 2-acyl groups in 3-sn-phosphoglycerides. This is Basic phospholipase A2 Pla2Vb from Vipera berus berus (Common viper).